The following is a 590-amino-acid chain: MHRYRTHTCGALRDSNIGETVRLSGWCHRIRDHGGVLFVDLRDHYGITQCVVDPDSKAFGLAEKLRSEWVVRMEGKVRHRPEGTENPELPTGQVELYVADIEVLGPAAELPLPVFGEQDYPEDIRLKYRFLDLRRDRLHQNIMTRGAIIDSMRRRMKEQGFFEFQTPILTASSPEGARDFLVPSRIHPGKFYALPQAPQQYKQLLMMSGFDRYFQIAPCFRDEDPRADRLPGEFYQLDVEMSFVEQEDVFAAMEPVITGVFEDFAKGKPVTKGWPRIPFAEALRKYGTDKPDLRNPLEMQDVSEHFRGSGFKVFARMLEDPKNQVWAIPAPGGGSRAFCDRMNSWAQGEGQPGLGYIMWREGGEGAGPLANNIGPERTAAIRSQLGTKEGDAAFFVAGDPDKFWKFAGLARTKVGEELNLIDKDRFALAWIVDFPMYEYNEDDKKVDFSHNPFSMPQGGLEALTTKDPLTIKAFQYDIACNGYEIASGGIRNHKPEAMVKAFEIAGYGEQEVVDRFGGMYRAFQYGAPPHGGMAAGVDRIVMLLCGTTNLREISLFPMNQQAMDLLMGAPSEATTKQLRELHIKPNLPNK.

Residue E175 participates in L-aspartate binding. An aspartate region spans residues 199–202; the sequence is QQYK. L-aspartate contacts are provided by R221 and H450. Residue 221 to 223 participates in ATP binding; the sequence is RDE. E484 serves as a coordination point for ATP. R491 contacts L-aspartate. 536–539 lines the ATP pocket; that stretch reads GVDR.

The protein belongs to the class-II aminoacyl-tRNA synthetase family. Type 1 subfamily. As to quaternary structure, homodimer.

Its subcellular location is the cytoplasm. The enzyme catalyses tRNA(Asx) + L-aspartate + ATP = L-aspartyl-tRNA(Asx) + AMP + diphosphate. Its function is as follows. Aspartyl-tRNA synthetase with relaxed tRNA specificity since it is able to aspartylate not only its cognate tRNA(Asp) but also tRNA(Asn). Reaction proceeds in two steps: L-aspartate is first activated by ATP to form Asp-AMP and then transferred to the acceptor end of tRNA(Asp/Asn). The chain is Aspartate--tRNA(Asp/Asn) ligase from Bradyrhizobium sp. (strain ORS 278).